Reading from the N-terminus, the 823-residue chain is ATM interactor (823 aa).

The disordered stretch occupies residues 28–67; sequence GAAAAASGPWVPPGPRLRGSRPRPAGATQQPAVPAPPAGE. Over residues 49-59 the composition is skewed to low complexity; sequence PRPAGATQQPA. The C2H2-type 1 zinc finger occupies 84 to 109; that stretch reads ILCTVRGCGKILPNSPALNMHLVKSH. The C2H2-type 2; degenerate zinc-finger motif lies at 165–184; sequence HKCSKCSNSYGTEWDLKRHA. Over residues 214–225 the composition is skewed to basic and acidic residues; sequence HEIPAEHRDPPS. Disordered regions lie at residues 214–234, 268–289, and 610–634; these read HEIPAEHRDPPSKKRKMENCA, EPSFEDSCGSNTDKQTLTTPPR, and RSLLSDTNPGPDTQLPSGPAQNPGI. The required for formation of RAD51 foci stretch occupies residues 223 to 442; sequence PPSKKRKMEN…ADSSVSSCSQ (220 aa). Polar residues-rich tracts occupy residues 275–286 and 613–629; these read CGSNTDKQTLTT and LSDTNPGPDTQLPSGPA.

As to quaternary structure, interacts via its C-terminus with ATM. Interacts with DYNLL1; this interaction inhibits ATMIN transcriptional activity and hence may play a role in a feedback loop whereby DYNLL1 inhibits transactivation of its own promoter by ATMIN. As to expression, ubiquitously expressed in normal tissues and cancer cell lines with highest levels in placenta and skeletal muscle.

The protein localises to the nucleus. In terms of biological role, transcription factor. Plays a crucial role in cell survival and RAD51 foci formation in response to methylating DNA damage. Involved in regulating the activity of ATM in the absence of DNA damage. May play a role in stabilizing ATM. Binds to the DYNLL1 promoter and activates its transcription. This Homo sapiens (Human) protein is ATM interactor (ATMIN).